We begin with the raw amino-acid sequence, 236 residues long: Protein-S-isoprenylcysteine O-methyltransferase (236 aa).

Transmembrane regions (helical) follow at residues 3-23 (NLHTSIAVASICLTSAFLGCV), 24-44 (FGLGFFVWIIYGYSIGGFFAF), 76-96 (AYWLAMLVGLLECLLSGGKSF), and 108-128 (FLINFIFSVYQTSALGFLCLG). Residues 155–158 (HLLV), Y163, and 168–171 (HPSY) contribute to the S-adenosyl-L-methionine site. Residues 174–194 (FFIWALGTQMLLGNFVSTLLF) form a helical membrane-spanning segment. R205 serves as a coordination point for substrate. E209 lines the S-adenosyl-L-methionine pocket.

It belongs to the class VI-like SAM-binding methyltransferase superfamily. Isoprenylcysteine carboxyl methyltransferase family.

The protein resides in the membrane. The enzyme catalyses [protein]-C-terminal S-[(2E,6E)-farnesyl]-L-cysteine + S-adenosyl-L-methionine = [protein]-C-terminal S-[(2E,6E)-farnesyl]-L-cysteine methyl ester + S-adenosyl-L-homocysteine. Mediates C-terminal methylation of the isoprenylated C-terminal cysteine in M-factor. The protein is Protein-S-isoprenylcysteine O-methyltransferase (mam4) of Schizosaccharomyces pombe (strain 972 / ATCC 24843) (Fission yeast).